The primary structure comprises 506 residues: Aldehyde dehydrogenase [NAD(P)+] 1 (506 aa).

The active-site Proton acceptor is the E268. C302 (nucleophile) is an active-site residue.

Belongs to the aldehyde dehydrogenase family.

It is found in the cytoplasm. The enzyme catalyses an aldehyde + NAD(+) + H2O = a carboxylate + NADH + 2 H(+). It catalyses the reaction 3-aminopropanal + NAD(+) + H2O = beta-alanine + NADH + 2 H(+). Its function is as follows. Cytoplasmic aldehyde dehydrogenase involved in ethanol oxidation. Required for pantothenic acid production through the conversion of 3-aminopropanal to beta-alanine, an intermediate in pantothenic acid (vitamin B5) and coenzyme A (CoA) biosynthesis. The polypeptide is Aldehyde dehydrogenase [NAD(P)+] 1 (ALD2) (Saccharomyces cerevisiae (strain ATCC 204508 / S288c) (Baker's yeast)).